We begin with the raw amino-acid sequence, 430 residues long: D-galactonate transporter (430 aa).

Residues 1–17 (MDIPVNAAKPGRRRYLT) are Cytoplasmic-facing. The helical transmembrane segment at 18 to 39 (LVMIFITVVICYVDRANLAVAS) threads the bilayer. D-galactonate-binding residues include Y29 and R32. The Periplasmic portion of the chain corresponds to 40–50 (AHIQEEFGITK). The helical transmembrane segment at 51 to 74 (AEMGYVFSAFAWLYTLCQIPGGWF) threads the bilayer. Y64 is a D-galactonate binding site. The Cytoplasmic portion of the chain corresponds to 75-81 (LDRVGSR). A helical membrane pass occupies residues 82-100 (VTYFIAIFGWSVATLFQGF). The Periplasmic portion of the chain corresponds to 101–103 (ATG). A helical membrane pass occupies residues 104–125 (LMSLIGLRAITGIFEAPAFPTN). Residues 126–141 (NRMVTSWFPEHERASA) are Cytoplasmic-facing. Residues 142-164 (VGFYTSGQFVGLAFLTPLLIWIQ) form a helical membrane-spanning segment. The Periplasmic portion of the chain corresponds to 165–168 (EMLS). The chain crosses the membrane as a helical span at residues 169–190 (WHWVFIVTGGIGIIWSLIWFKV). Residues 191-241 (YQPPRLTKGISKAELDYIRDGGGLVDGDAPVKKEARQPLTAKDWKLVFHRK) lie on the Cytoplasmic side of the membrane. The helical transmembrane segment at 242-267 (LIGVYLGQFAVASTLWFFLTWFPNYL) threads the bilayer. Residues 268–276 (TQEKGITAL) lie on the Periplasmic side of the membrane. Residues 277–297 (KAGFMTTVPFLAAFVGVLLSG) traverse the membrane as a helical segment. Residues 298–314 (WVADLLVRKGFSLGFAR) are Cytoplasmic-facing. The chain crosses the membrane as a helical span at residues 315–333 (KTPIICGLLISTCIMGANY). At 334–336 (TND) the chain is on the periplasmic side. Residues 337 to 354 (PMMIMCLMALAFFGNGFA) form a helical membrane-spanning segment. The Cytoplasmic segment spans residues 355 to 373 (SITWSLVSSLAPMRLIGLT). W358 is a binding site for D-galactonate. The chain crosses the membrane as a helical span at residues 374-395 (GGVFNFAGGLGGITVPLVVGYL). At 396–400 (AQGYG) the chain is on the periplasmic side. The chain crosses the membrane as a helical span at residues 401–423 (FAPALVYISAVALIGALSYILLV). The Cytoplasmic segment spans residues 424–430 (GDVKRVG).

Belongs to the major facilitator superfamily. Phthalate permease family.

It localises to the cell inner membrane. The catalysed reaction is D-galactonate(in) + H(+)(in) = D-galactonate(out) + H(+)(out). Functionally, involved in D-galactonate metabolism. Catalyzes the proton-dependent uptake of galactonate into the cell. This chain is D-galactonate transporter (dgoT), found in Escherichia coli O6:H1 (strain CFT073 / ATCC 700928 / UPEC).